Reading from the N-terminus, the 101-residue chain is Small ribosomal subunit protein bS18c (101 aa).

Belongs to the bacterial ribosomal protein bS18 family. Part of the 30S ribosomal subunit.

The protein localises to the plastid. It localises to the chloroplast. This chain is Small ribosomal subunit protein bS18c, found in Gossypium barbadense (Sea Island cotton).